The primary structure comprises 159 residues: MSRFRILSVGRGMPKHEKGLFDDYAGRMKRYGGLELVEIAEGQRTGKESPATRSKAIADEGERILEKMDKRLWMALDRGGKLLDSETLAAQLLRWQEAGDRDVGLIIGGPDGLHERVLQGVAFKLAFGPMTFPHMLVRVMLAEQLYRAMTLQHGVPYHR.

S-adenosyl-L-methionine is bound by residues Gly-108 and 127 to 132 (FGPMTF).

The protein belongs to the RNA methyltransferase RlmH family. Homodimer.

The protein resides in the cytoplasm. The enzyme catalyses pseudouridine(1915) in 23S rRNA + S-adenosyl-L-methionine = N(3)-methylpseudouridine(1915) in 23S rRNA + S-adenosyl-L-homocysteine + H(+). In terms of biological role, specifically methylates the pseudouridine at position 1915 (m3Psi1915) in 23S rRNA. The sequence is that of Ribosomal RNA large subunit methyltransferase H from Magnetococcus marinus (strain ATCC BAA-1437 / JCM 17883 / MC-1).